Reading from the N-terminus, the 181-residue chain is ATP synthase subunit delta (181 aa).

Belongs to the ATPase delta chain family. F-type ATPases have 2 components, F(1) - the catalytic core - and F(0) - the membrane proton channel. F(1) has five subunits: alpha(3), beta(3), gamma(1), delta(1), epsilon(1). F(0) has three main subunits: a(1), b(2) and c(10-14). The alpha and beta chains form an alternating ring which encloses part of the gamma chain. F(1) is attached to F(0) by a central stalk formed by the gamma and epsilon chains, while a peripheral stalk is formed by the delta and b chains.

The protein resides in the cell inner membrane. F(1)F(0) ATP synthase produces ATP from ADP in the presence of a proton or sodium gradient. F-type ATPases consist of two structural domains, F(1) containing the extramembraneous catalytic core and F(0) containing the membrane proton channel, linked together by a central stalk and a peripheral stalk. During catalysis, ATP synthesis in the catalytic domain of F(1) is coupled via a rotary mechanism of the central stalk subunits to proton translocation. Functionally, this protein is part of the stalk that links CF(0) to CF(1). It either transmits conformational changes from CF(0) to CF(1) or is implicated in proton conduction. The sequence is that of ATP synthase subunit delta from Aquifex aeolicus (strain VF5).